Consider the following 403-residue polypeptide: Phosphoglycerate kinase (403 aa).

Residues 22-24 (DLN), Arg-37, 60-63 (HLGR), Arg-119, and Arg-156 each bind substrate. ATP is bound by residues Lys-206, Gly-302, Glu-333, and 359-362 (GGDS).

The protein belongs to the phosphoglycerate kinase family. Monomer.

It is found in the cytoplasm. The catalysed reaction is (2R)-3-phosphoglycerate + ATP = (2R)-3-phospho-glyceroyl phosphate + ADP. The protein operates within carbohydrate degradation; glycolysis; pyruvate from D-glyceraldehyde 3-phosphate: step 2/5. This is Phosphoglycerate kinase from Leifsonia xyli subsp. xyli (strain CTCB07).